The following is a 174-amino-acid chain: Cuticle protein 1 (174 aa).

An N-terminal signal peptide occupies residues Met1–Ala18.

It is found in the secreted. In Lonomia obliqua (Moth), this protein is Cuticle protein 1.